A 287-amino-acid chain; its full sequence is Movement protein (287 aa).

Belongs to the nucleorhabdovirus type-1 movement protein family.

Functionally, transports viral genome to neighboring plant cells directly through plasmosdesmata, without any budding. The movement protein allows efficient cell to cell propagation, by bypassing the host cell wall barrier. The chain is Movement protein (3) from Colocasia esculenta (Wild taro).